The sequence spans 155 residues: Ribosome maturation factor RimP (155 aa).

This sequence belongs to the RimP family.

It localises to the cytoplasm. Required for maturation of 30S ribosomal subunits. This Synechococcus sp. (strain CC9902) protein is Ribosome maturation factor RimP.